A 2524-amino-acid polypeptide reads, in one-letter code: Neurogenic locus notch homolog protein 1 (2524 aa).

Residues methionine 1–glycine 19 form the signal peptide. EGF-like domains lie at leucine 20–glutamine 57, phenylalanine 58–leucine 99, valine 102–glutamine 140, and glutamine 141–lysine 177. The Extracellular segment spans residues leucine 20–tyrosine 1729. Intrachain disulfides connect cysteine 22–cysteine 35, cysteine 29–cysteine 45, cysteine 47–cysteine 56, cysteine 62–cysteine 74, cysteine 68–cysteine 87, cysteine 89–cysteine 98, cysteine 106–cysteine 117, cysteine 111–cysteine 128, cysteine 130–cysteine 139, cysteine 145–cysteine 156, cysteine 150–cysteine 165, cysteine 167–cysteine 176, cysteine 183–cysteine 194, cysteine 188–cysteine 203, cysteine 205–cysteine 214, cysteine 221–cysteine 232, cysteine 226–cysteine 242, cysteine 244–cysteine 253, cysteine 260–cysteine 271, cysteine 265–cysteine 280, cysteine 282–cysteine 291, cysteine 298–cysteine 311, cysteine 305–cysteine 320, cysteine 322–cysteine 331, cysteine 338–cysteine 349, cysteine 343–cysteine 358, cysteine 360–cysteine 369, cysteine 375–cysteine 386, cysteine 380–cysteine 397, cysteine 399–cysteine 408, cysteine 415–cysteine 428, cysteine 422–cysteine 437, and cysteine 439–cysteine 448. Residues aspartate 179–aspartate 215 form the EGF-like 5; calcium-binding domain. In terms of domain architecture, EGF-like 6 spans proline 217 to glutamate 254. Threonine 231 carries O-linked (Fuc...) threonine; alternate glycosylation. Threonine 231 carries O-linked (GalNAc...) threonine; alternate glycosylation. Residues asparagine 256–threonine 292 form the EGF-like 7; calcium-binding domain. In terms of domain architecture, EGF-like 8; calcium-binding spans aspartate 294–serine 332. Residues asparagine 334–histidine 370 enclose the EGF-like 9; calcium-binding domain. The region spanning leucine 371–asparagine 409 is the EGF-like 10 domain. The EGF-like 11; calcium-binding domain maps to aspartate 411–glutamate 449. Ca(2+)-binding residues include threonine 431 and serine 434. Serine 434 carries an O-linked (Glc...) serine glycan. Ca(2+) is bound by residues aspartate 451, valine 452, and glutamate 454. Residues aspartate 451–glutamate 487 enclose the EGF-like 12; calcium-binding domain. 3 disulfides stabilise this stretch: cysteine 455–cysteine 466, cysteine 460–cysteine 475, and cysteine 477–cysteine 486. Residue serine 457 is glycosylated (O-linked (Glc...) serine). Asparagine 462 is a glycosylation site (N-linked (GlcNAc...) asparagine). Threonine 465 is a glycosylation site (O-linked (Fuc...) threonine). The Ca(2+) site is built by aspartate 468 and glutamine 469. The Ca(2+) site is built by asparagine 489, isoleucine 490, and glutamate 492. The region spanning asparagine 489–glutamine 525 is the EGF-like 13; calcium-binding domain. 75 cysteine pairs are disulfide-bonded: cysteine 493–cysteine 504, cysteine 498–cysteine 513, cysteine 515–cysteine 524, cysteine 531–cysteine 542, cysteine 536–cysteine 551, cysteine 553–cysteine 562, cysteine 569–cysteine 579, cysteine 574–cysteine 588, cysteine 590–cysteine 599, cysteine 606–cysteine 617, cysteine 611–cysteine 626, cysteine 628–cysteine 637, cysteine 644–cysteine 654, cysteine 649–cysteine 663, cysteine 665–cysteine 674, cysteine 681–cysteine 692, cysteine 686–cysteine 701, cysteine 703–cysteine 712, cysteine 719–cysteine 729, cysteine 724–cysteine 738, cysteine 740–cysteine 749, cysteine 756–cysteine 767, cysteine 761–cysteine 776, cysteine 778–cysteine 787, cysteine 794–cysteine 805, cysteine 799–cysteine 814, cysteine 816–cysteine 825, cysteine 832–cysteine 843, cysteine 837–cysteine 854, cysteine 856–cysteine 865, cysteine 872–cysteine 883, cysteine 877–cysteine 892, cysteine 894–cysteine 903, cysteine 910–cysteine 921, cysteine 915–cysteine 930, cysteine 932–cysteine 941, cysteine 948–cysteine 959, cysteine 953–cysteine 968, cysteine 970–cysteine 979, cysteine 986–cysteine 997, cysteine 991–cysteine 1006, cysteine 1008–cysteine 1017, cysteine 1024–cysteine 1035, cysteine 1029–cysteine 1044, cysteine 1046–cysteine 1055, cysteine 1062–cysteine 1073, cysteine 1067–cysteine 1082, cysteine 1084–cysteine 1093, cysteine 1100–cysteine 1121, cysteine 1115–cysteine 1130, cysteine 1132–cysteine 1141, cysteine 1148–cysteine 1159, cysteine 1153–cysteine 1168, cysteine 1170–cysteine 1179, cysteine 1186–cysteine 1197, cysteine 1191–cysteine 1206, cysteine 1208–cysteine 1217, cysteine 1224–cysteine 1243, cysteine 1237–cysteine 1252, cysteine 1254–cysteine 1263, cysteine 1270–cysteine 1283, cysteine 1275–cysteine 1292, cysteine 1294–cysteine 1303, cysteine 1310–cysteine 1321, cysteine 1315–cysteine 1333, cysteine 1335–cysteine 1344, cysteine 1351–cysteine 1362, cysteine 1356–cysteine 1371, cysteine 1373–cysteine 1382, cysteine 1390–cysteine 1401, cysteine 1395–cysteine 1412, cysteine 1414–cysteine 1423, cysteine 1447–cysteine 1470, cysteine 1452–cysteine 1465, and cysteine 1461–cysteine 1477. O-linked (Glc...) serine glycosylation is present at serine 495. The Ca(2+) site is built by aspartate 506 and lysine 507. The EGF-like 14; calcium-binding domain occupies aspartate 527–glutamate 563. Positions aspartate 565–aspartate 600 constitute an EGF-like 15; calcium-binding domain. In terms of domain architecture, EGF-like 16; calcium-binding spans aspartate 602–glutamate 638. An EGF-like 17 domain is found at lysine 640–asparagine 675. An EGF-like 18; calcium-binding domain is found at asparagine 677–leucine 713. The region spanning glutamate 715–aspartate 750 is the EGF-like 19; calcium-binding domain. Positions asparagine 752 to glutamine 788 constitute an EGF-like 20; calcium-binding domain. The 37-residue stretch at asparagine 790–glutamate 826 folds into the EGF-like 21; calcium-binding domain. In terms of domain architecture, EGF-like 22 spans valine 828–glutamate 866. The EGF-like 23; calcium-binding domain maps to aspartate 868–glutamate 904. A glycan (N-linked (GlcNAc...) asparagine) is linked at asparagine 887. The EGF-like 24; calcium-binding domain maps to aspartate 906–glutamate 942. The 37-residue stretch at aspartate 944–glutamate 980 folds into the EGF-like 25; calcium-binding domain. N-linked (GlcNAc...) asparagine glycosylation is present at asparagine 958. Residues asparagine 982–glutamine 1018 enclose the EGF-like 26 domain. Residues aspartate 1020–glutamine 1056 form the EGF-like 27; calcium-binding domain. EGF-like domains follow at residues leucine 1058–aspartate 1094 and proline 1096–glutamate 1142. The EGF-like 30; calcium-binding domain occupies glutamine 1144–serine 1180. Asparagine 1178 carries N-linked (GlcNAc...) asparagine glycosylation. Positions glutamate 1182 to glutamate 1218 constitute an EGF-like 31; calcium-binding domain. The EGF-like 32; calcium-binding domain occupies asparagine 1220 to glutamate 1264. EGF-like domains lie at aspartate 1266–glutamate 1304, valine 1306–tyrosine 1346, aspartate 1347–glutamine 1383, and valine 1386–histidine 1424. Threonine 1400 carries an O-linked (Fuc...) threonine; alternate glycan. O-linked (GalNAc...) threonine; alternate glycosylation occurs at threonine 1400. LNR repeat units lie at residues cysteine 1447–asparagine 1487, cysteine 1488–leucine 1529, and tyrosine 1530–glutamate 1564. An N-linked (GlcNAc...) asparagine glycan is attached at asparagine 1487. Intrachain disulfides connect cysteine 1488–cysteine 1512, cysteine 1494–cysteine 1507, cysteine 1503–cysteine 1519, cysteine 1534–cysteine 1547, and cysteine 1543–cysteine 1559. The N-linked (GlcNAc...) asparagine glycan is linked to asparagine 1508. Residue asparagine 1584 is glycosylated (N-linked (GlcNAc...) asparagine). Residues proline 1730 to valine 1750 traverse the membrane as a helical segment. Residues asparagine 1751–lysine 2524 are Cytoplasmic-facing. ANK repeat units lie at residues aspartate 1876 to asparagine 1919, threonine 1924 to valine 1953, methionine 1957 to alanine 1987, aspartate 1991 to alanine 2020, phenylalanine 2024 to methionine 2053, and lysine 2057 to isoleucine 2086. Disordered stretches follow at residues asparagine 2144 to leucine 2230, methionine 2369 to serine 2407, and leucine 2451 to lysine 2524. Polar residues-rich tracts occupy residues glycine 2180–valine 2192 and aspartate 2208–leucine 2230. A compositionally biased stretch (low complexity) spans methionine 2369–serine 2394. Polar residues-rich tracts occupy residues threonine 2395–serine 2407 and leucine 2451–leucine 2471. A compositionally biased stretch (low complexity) spans proline 2481–serine 2496. The span at asparagine 2497 to arginine 2516 shows a compositional bias: polar residues.

Belongs to the NOTCH family. As to quaternary structure, forms a ternary complex with nrarp and rbpj/suh. In terms of processing, O-glycosylated on the EGF-like domains. Contains both O-linked fucose and O-linked glucose. O-linked glycosylation by galnt11 is involved in determination of left/right symmetry: glycosylation promotes activation of notch1, possibly by promoting cleavage by adam17, modulating the balance between motile and immotile (sensory) cilia at the left-right organiser (LRO). Post-translationally, synthesized in the endoplasmic reticulum as an inactive form which is proteolytically cleaved by a furin-like convertase in the trans-Golgi network before it reaches the plasma membrane to yield an active, ligand-accessible form. Cleavage results in a C-terminal fragment N(TM) and a N-terminal fragment N(EC). Following ligand binding, it is cleaved by adam17 to yield a membrane-associated intermediate fragment called notch extracellular truncation (NEXT). Following endocytosis, this fragment is then cleaved by presenilin dependent gamma-secretase to release a Notch-derived peptide containing the intracellular domain (NICD) from the membrane.

It localises to the cell membrane. The protein localises to the nucleus. Functions as a receptor for membrane-bound ligands Jagged-1 (JAG1), Jagged-2 (JAG2) and Delta-1 (DLL1) to regulate cell-fate determination. Upon ligand activation through the released notch intracellular domain (NICD) it forms a transcriptional activator complex with RBPJ/RBPSUH and activates genes of the enhancer of split locus. Affects the implementation of differentiation, proliferation and apoptotic programs. Involved in angiogenesis; negatively regulates endothelial cell proliferation and migration and angiogenic sprouting. Involved in the maturation of both CD4(+) and CD8(+) cells in the thymus. Important for follicular differentiation and possibly cell fate selection within the follicle. During cerebellar development, functions as a receptor for neuronal DNER and is involved in the differentiation of Bergmann glia. Represses neuronal and myogenic differentiation. May play an essential role in postimplantation development, probably in some aspect of cell specification and/or differentiation. May be involved in mesoderm development, somite formation and neurogenesis. Involved in determination of left/right symmetry by modulating the balance between motile and immotile (sensory) cilia at the left-right organiser (LRO). The protein is Neurogenic locus notch homolog protein 1 (notch1) of Xenopus laevis (African clawed frog).